The sequence spans 398 residues: 1-deoxy-D-xylulose 5-phosphate reductoisomerase (398 aa).

NADPH is bound by residues Thr28, Gly29, Ser30, Ile31, Gly54, Asn57, and Asn135. Lys136 is a binding site for 1-deoxy-D-xylulose 5-phosphate. Glu137 lines the NADPH pocket. Asp159 is a Mn(2+) binding site. Ser160, Glu161, Ser185, and His208 together coordinate 1-deoxy-D-xylulose 5-phosphate. Position 161 (Glu161) interacts with Mn(2+). Gly214 is a binding site for NADPH. 1-deoxy-D-xylulose 5-phosphate contacts are provided by Ser221, Asn226, Lys227, and Glu230. Glu230 contributes to the Mn(2+) binding site.

This sequence belongs to the DXR family. The cofactor is Mg(2+). It depends on Mn(2+) as a cofactor.

The catalysed reaction is 2-C-methyl-D-erythritol 4-phosphate + NADP(+) = 1-deoxy-D-xylulose 5-phosphate + NADPH + H(+). It functions in the pathway isoprenoid biosynthesis; isopentenyl diphosphate biosynthesis via DXP pathway; isopentenyl diphosphate from 1-deoxy-D-xylulose 5-phosphate: step 1/6. Its function is as follows. Catalyzes the NADPH-dependent rearrangement and reduction of 1-deoxy-D-xylulose-5-phosphate (DXP) to 2-C-methyl-D-erythritol 4-phosphate (MEP). In Rhodococcus jostii (strain RHA1), this protein is 1-deoxy-D-xylulose 5-phosphate reductoisomerase.